We begin with the raw amino-acid sequence, 90 residues long: Neuropeptide-like 3 (90 aa).

Positions 1–16 (MFKLCVFVALLSLAAA) are cleaved as a signal peptide. 2 propeptides span residues 17–54 (APAP…LAPQ) and 67–79 (AITQ…LLIK). Ile89 carries the isoleucine amide modification.

The protein resides in the secreted. This chain is Neuropeptide-like 3 (Nplp3), found in Drosophila melanogaster (Fruit fly).